A 183-amino-acid polypeptide reads, in one-letter code: Gamma-crystallin N-B (183 aa).

4 consecutive Beta/gamma crystallin 'Greek key' domains span residues 6 to 46 (GKIC…RVES), 47 to 89 (GAWI…RPIR), 95 to 136 (YRME…RVFG), and 138 to 180 (GAWV…RRIV).

It belongs to the beta/gamma-crystallin family. In terms of assembly, monomer.

Its function is as follows. Crystallins are the dominant structural components of the vertebrate eye lens. The sequence is that of Gamma-crystallin N-B (crygnb) from Danio rerio (Zebrafish).